Here is an 85-residue protein sequence, read N- to C-terminus: Large ribosomal subunit protein bL27 (85 aa).

Residues 1–21 (MAHKKGVGSTRNGRDSESKRL) form a disordered region.

This sequence belongs to the bacterial ribosomal protein bL27 family.

The protein is Large ribosomal subunit protein bL27 of Geobacter sulfurreducens (strain ATCC 51573 / DSM 12127 / PCA).